Reading from the N-terminus, the 310-residue chain is tRNA dimethylallyltransferase (310 aa).

Residue 5–12 (GPTASGKS) coordinates ATP. A substrate-binding site is contributed by 7-12 (TASGKS). Residues 30–33 (DSMQ) form an interaction with substrate tRNA region.

Belongs to the IPP transferase family. In terms of assembly, monomer. Mg(2+) serves as cofactor.

It catalyses the reaction adenosine(37) in tRNA + dimethylallyl diphosphate = N(6)-dimethylallyladenosine(37) in tRNA + diphosphate. Its function is as follows. Catalyzes the transfer of a dimethylallyl group onto the adenine at position 37 in tRNAs that read codons beginning with uridine, leading to the formation of N6-(dimethylallyl)adenosine (i(6)A). The polypeptide is tRNA dimethylallyltransferase (Rhodopseudomonas palustris (strain HaA2)).